Here is a 214-residue protein sequence, read N- to C-terminus: Dephospho-CoA kinase (214 aa).

The DPCK domain maps to 4–204; it reads IVGLTGGIGS…QRYLQLAQQK (201 aa). ATP is bound at residue 12–17; the sequence is GSGKST.

Belongs to the CoaE family.

Its subcellular location is the cytoplasm. It carries out the reaction 3'-dephospho-CoA + ATP = ADP + CoA + H(+). The protein operates within cofactor biosynthesis; coenzyme A biosynthesis; CoA from (R)-pantothenate: step 5/5. Its function is as follows. Catalyzes the phosphorylation of the 3'-hydroxyl group of dephosphocoenzyme A to form coenzyme A. This Mannheimia succiniciproducens (strain KCTC 0769BP / MBEL55E) protein is Dephospho-CoA kinase.